Consider the following 460-residue polypeptide: Chromosomal replication initiator protein DnaA (460 aa).

A domain I, interacts with DnaA modulators region spans residues 1 to 91 (MSLINPKVSA…LLWQNEDKSI (91 aa)). Positions 91-122 (ICSIDIQVTEEKNSSSSIISKNKEESVNNLGS) are domain II. The interval 123-342 (PLDPRFTFDN…GALNKVAHTS (220 aa)) is domain III, AAA+ region. The ATP site is built by G169, G171, K172, and T173. The segment at 343–460 (LIGRSMTVES…EINQLRKMFK (118 aa)) is domain IV, binds dsDNA.

The protein belongs to the DnaA family. Oligomerizes as a right-handed, spiral filament on DNA at oriC.

It is found in the cytoplasm. Plays an essential role in the initiation and regulation of chromosomal replication. ATP-DnaA binds to the origin of replication (oriC) to initiate formation of the DNA replication initiation complex once per cell cycle. Binds the DnaA box (a 9 base pair repeat at the origin) and separates the double-stranded (ds)DNA. Forms a right-handed helical filament on oriC DNA; dsDNA binds to the exterior of the filament while single-stranded (ss)DNA is stabiized in the filament's interior. The ATP-DnaA-oriC complex binds and stabilizes one strand of the AT-rich DNA unwinding element (DUE), permitting loading of DNA polymerase. After initiation quickly degrades to an ADP-DnaA complex that is not apt for DNA replication. Binds acidic phospholipids. This chain is Chromosomal replication initiator protein DnaA, found in Wolbachia sp. subsp. Brugia malayi (strain TRS).